Here is a 79-residue protein sequence, read N- to C-terminus: uncharacterized protein (79 aa).

Positions methionine 1–alanine 33 are cleaved as a signal peptide.

This is an uncharacterized protein from Salmonella typhi.